Here is a 1199-residue protein sequence, read N- to C-terminus: MRAEKQYTRNEVEETIVRWKKLKESGATEHDNTEYAQLCDVLRSAQSEIEARRDLKGHIKRCFSSVDKNTEKLILKQQVLAYKKLSQNLPAPDDCILSVLLRLSKDEQLLQSIVKQPLQNSKVDGKVRRDFGSCQITPSAKQQRKYLQYQISEDDAIKNRMFRRMSDLESYPAVMRDVAELKDDNERLNLDTIKRNALVELKKLRLIKQQESLRHQVMHCQPHLRTIVNAVERMSCRRPKLVPQATRLTEVLERQQRSDRERRLKQKQCDYLQTVCAHGREINVRTKNAQARAQKANRAVLAYHSHIEKEEQRRAERNAKQRLQALKENDEEAYLKLIDQAKDTRITHLLRQTDHYLDSLAAAVKVQQSQFGESAYDEDMDRRMNPEDDRKIDYYNVAHNIREVVTEQPSILVGGKLKEYQLRGLQWMISLYNNHLNGILADEMGLGKTIQTISLITHLIEKKRQNGPFLVIVPLSTLTNWTMEFERWAPSIVKIVYKGPPQVRKALHPQVRHSNFQVLLTTYEYIIKDRPLLSRIKWIYMIIDEGHRMKNTQSKLTNTLTTYYSSRYRLILTGTPLQNNLPELWALLNFVLPRIFNSIKSFDEWFNTPFANTGGQDKMELTEEESLLVIRRLHKVLRPFLLRRLKKDVEAELPDKVEKVIRCQMSGLQQKLYYQMKKHGMLYVEDAKRGKTGIKGLQNTVMQLKKICNHPFVFEDVERSIDPTGFNYDMLWRVSGKFELLDRILPKLFRSGHRILMFFQMTQIMNIMEDYLHYRQWRYLRLDGSTKADDRSKLLGVFNDPTAEVNLFLLSTRAGGLGLNLQTADTVIIFDSDWNPHQDLQAQDRAHRIGQTKEVRIYRLITEKSVEENILARAQYKLDIDGKVIQAGKFDNKSTPEEREAFLRSLLENENGEEENDEKGELDDDELNEILARGDDELRLFKQMTEDLERESPYGKNKEKERLIQVSELPEFYQREEPEKTTDLLQEEPLGRGARRRTPVVYDEAVRDAQWMAEMDMESEARPTRGRPKRNIASVDETPALTLNGKPKKKRGPAPDTLTSEHRSLLRRVCLEIYKAVNELEDDNGRPLNKLFLELPSKKLYPDYYMIIKSPIALDAIRKHINGTFYKTLEAMKSDLMTMFNNARTYNEEGSFVYEDANKMQTAMETKIEELEEDGTLATLRGMEAEATSQLEDRIENEA.

Residues 256 to 328 (QRSDRERRLK…AKQRLQALKE (73 aa)) form the HSA domain. A Helicase ATP-binding domain is found at 429 to 594 (ISLYNNHLNG…WALLNFVLPR (166 aa)). ATP is bound at residue 442–449 (DEMGLGKT). Residues 544–547 (DEGH) carry the DEGH box motif. Positions 740–903 (LLDRILPKLF…STPEEREAFL (164 aa)) constitute a Helicase C-terminal domain. Positions 1017-1059 (MESEARPTRGRPKRNIASVDETPALTLNGKPKKKRGPAPDTLT) are disordered. Residues 1061–1171 (EHRSLLRRVC…TAMETKIEEL (111 aa)) form the Bromo domain.

Belongs to the SNF2/RAD54 helicase family. As to quaternary structure, component of the RSC complex composed of at least arp9, arp42, rsc1, rsc4, rsc7, rsc9, rsc58, sfh1, snf21, ssr1, ssr2, ssr3 and ssr4. The complex interacts with histone and histone variant components of centromeric chromatin.

The protein resides in the nucleus. Its function is as follows. Helicase. Component of the chromatin structure remodeling complex (RSC), which is involved in transcription regulation and nucleosome positioning. Controls particularly membrane and organelle development genes. The chain is Chromatin structure-remodeling complex subunit snf21 (snf21) from Schizosaccharomyces pombe (strain 972 / ATCC 24843) (Fission yeast).